Here is a 212-residue protein sequence, read N- to C-terminus: Dephospho-CoA kinase (212 aa).

The DPCK domain maps to 3 to 204 (ILGLTGSIGM…GSRPAAPVGG (202 aa)). 11–16 (GMGKST) is an ATP binding site.

It belongs to the CoaE family.

The protein localises to the cytoplasm. It carries out the reaction 3'-dephospho-CoA + ATP = ADP + CoA + H(+). The protein operates within cofactor biosynthesis; coenzyme A biosynthesis; CoA from (R)-pantothenate: step 5/5. In terms of biological role, catalyzes the phosphorylation of the 3'-hydroxyl group of dephosphocoenzyme A to form coenzyme A. The sequence is that of Dephospho-CoA kinase from Paramagnetospirillum magneticum (strain ATCC 700264 / AMB-1) (Magnetospirillum magneticum).